A 215-amino-acid chain; its full sequence is MNQSILSPFGNTAEERVLNAINAFKHGTGVLVLDDEDRENEGDLIFPAETITSEQMAKLIRYGSGIVCLCITDERCQQLDLPPMVEHNNSVNKTAFTVTIEAAKGVSTGVSAADRVTTIQTAIADNAVPTDLHRPGHVFPLRAANGGVLTRRGHTEASVDLARLAGFKEAGVICEITNDDGTMARTPEIVEFAKKFGYSVLTIEDLVEYRLAHNI.

D-ribulose 5-phosphate is bound by residues 38-39 (RE), Asp43, 151-155 (RRGHT), and Glu175. Glu39 provides a ligand contact to Mg(2+). A Mg(2+)-binding site is contributed by His154.

It belongs to the DHBP synthase family. As to quaternary structure, homodimer. Mg(2+) serves as cofactor. Mn(2+) is required as a cofactor.

The enzyme catalyses D-ribulose 5-phosphate = (2S)-2-hydroxy-3-oxobutyl phosphate + formate + H(+). It functions in the pathway cofactor biosynthesis; riboflavin biosynthesis; 2-hydroxy-3-oxobutyl phosphate from D-ribulose 5-phosphate: step 1/1. Functionally, catalyzes the conversion of D-ribulose 5-phosphate to formate and 3,4-dihydroxy-2-butanone 4-phosphate. The chain is 3,4-dihydroxy-2-butanone 4-phosphate synthase from Haemophilus influenzae (strain 86-028NP).